The primary structure comprises 333 residues: Mitochondrial glycine transporter (333 aa).

The tract at residues methionine 1–serine 25 is disordered. Solcar repeat units follow at residues proline 26–alanine 109, leucine 127–aspartate 220, and arginine 236–serine 319. The next 6 membrane-spanning stretches (helical) occupy residues leucine 32 to glutamine 57, glycine 84 to valine 110, leucine 133 to glutamate 158, glycine 195 to lysine 218, isoleucine 240 to leucine 266, and glycine 294 to isoleucine 312.

This sequence belongs to the mitochondrial carrier (TC 2.A.29) family. SLC25A38 subfamily.

It is found in the mitochondrion inner membrane. It carries out the reaction glycine(in) = glycine(out). Its function is as follows. Mitochondrial glycine transporter that imports glycine into the mitochondrial matrix. Plays an important role in providing glycine for the first enzymatic step in heme biosynthesis, the condensation of glycine with succinyl-CoA to produce 5-aminolevulinate (ALA) in the mitochondrial matrix. This chain is Mitochondrial glycine transporter, found in Scheffersomyces stipitis (strain ATCC 58785 / CBS 6054 / NBRC 10063 / NRRL Y-11545) (Yeast).